Consider the following 158-residue polypeptide: Cyclic pyranopterin monophosphate synthase (158 aa).

Substrate-binding positions include 76-78 (LCH) and 114-115 (ME). The active site involves Asp129.

It belongs to the MoaC family. In terms of assembly, homohexamer; trimer of dimers.

The enzyme catalyses (8S)-3',8-cyclo-7,8-dihydroguanosine 5'-triphosphate = cyclic pyranopterin phosphate + diphosphate. The protein operates within cofactor biosynthesis; molybdopterin biosynthesis. Functionally, catalyzes the conversion of (8S)-3',8-cyclo-7,8-dihydroguanosine 5'-triphosphate to cyclic pyranopterin monophosphate (cPMP). The protein is Cyclic pyranopterin monophosphate synthase of Shewanella woodyi (strain ATCC 51908 / MS32).